The sequence spans 296 residues: 33 kDa chaperonin (296 aa).

Intrachain disulfides connect Cys-233/Cys-235 and Cys-267/Cys-270.

The protein belongs to the HSP33 family. In terms of processing, under oxidizing conditions two disulfide bonds are formed involving the reactive cysteines. Under reducing conditions zinc is bound to the reactive cysteines and the protein is inactive.

Its subcellular location is the cytoplasm. Redox regulated molecular chaperone. Protects both thermally unfolding and oxidatively damaged proteins from irreversible aggregation. Plays an important role in the bacterial defense system toward oxidative stress. In Actinobacillus pleuropneumoniae serotype 7 (strain AP76), this protein is 33 kDa chaperonin.